Here is a 265-residue protein sequence, read N- to C-terminus: Hydroxyethylthiazole kinase (265 aa).

Substrate is bound at residue Met-50. ATP is bound by residues Arg-125 and Thr-171. Gly-198 is a substrate binding site.

The protein belongs to the Thz kinase family. The cofactor is Mg(2+).

It carries out the reaction 5-(2-hydroxyethyl)-4-methylthiazole + ATP = 4-methyl-5-(2-phosphooxyethyl)-thiazole + ADP + H(+). It functions in the pathway cofactor biosynthesis; thiamine diphosphate biosynthesis; 4-methyl-5-(2-phosphoethyl)-thiazole from 5-(2-hydroxyethyl)-4-methylthiazole: step 1/1. Catalyzes the phosphorylation of the hydroxyl group of 4-methyl-5-beta-hydroxyethylthiazole (THZ). The polypeptide is Hydroxyethylthiazole kinase (Salmonella schwarzengrund (strain CVM19633)).